We begin with the raw amino-acid sequence, 151 residues long: Regulatory protein RecX (151 aa).

Belongs to the RecX family.

Its subcellular location is the cytoplasm. In terms of biological role, modulates RecA activity. The protein is Regulatory protein RecX of Chlorobium phaeobacteroides (strain BS1).